A 326-amino-acid chain; its full sequence is MTAFHSVAVIGAGAWGTALAMVAARAGRSVTLWARNAEHATRIASTRDNPRLPGVRLAPDIVVTSELALAARADMLLIATPAQHLRGAVNMLASHIARPTPVVACAKGIEHGTHKFMTEVIAEAALHAQPAILSGPSFADDVARGLPTAVTLAAKEEELASSLVQALGSPTFRPYHSTDVRGVEIGGAAKNVLAIAAGIVVGRNLGASALAALTTRGFSELARLGRACGARPETLSGLSGLGDLLLSCSTAQSRNFALGIALGRGEAAPAGKLAEGAFTAPVLVELAAARNVDMPVSQAVAAILDNKLTIDAAIEGLLTRPFKAEE.

Residues Trp-15, Arg-35, and Lys-107 each contribute to the NADPH site. Residues Lys-107, Gly-135, and Ser-137 each coordinate sn-glycerol 3-phosphate. Ala-139 is a binding site for NADPH. The sn-glycerol 3-phosphate site is built by Lys-190, Asp-243, Ser-253, Arg-254, and Asn-255. The Proton acceptor role is filled by Lys-190. Residue Arg-254 participates in NADPH binding. NADPH contacts are provided by Leu-273 and Glu-275.

The protein belongs to the NAD-dependent glycerol-3-phosphate dehydrogenase family.

Its subcellular location is the cytoplasm. The enzyme catalyses sn-glycerol 3-phosphate + NAD(+) = dihydroxyacetone phosphate + NADH + H(+). It carries out the reaction sn-glycerol 3-phosphate + NADP(+) = dihydroxyacetone phosphate + NADPH + H(+). It functions in the pathway membrane lipid metabolism; glycerophospholipid metabolism. Its function is as follows. Catalyzes the reduction of the glycolytic intermediate dihydroxyacetone phosphate (DHAP) to sn-glycerol 3-phosphate (G3P), the key precursor for phospholipid synthesis. The protein is Glycerol-3-phosphate dehydrogenase [NAD(P)+] of Bradyrhizobium diazoefficiens (strain JCM 10833 / BCRC 13528 / IAM 13628 / NBRC 14792 / USDA 110).